The following is a 164-amino-acid chain: MAKKKKKVDENNSVLATNRKARHDYHIIDTWEAGVVLLGTEIKSLREGKVSLVDSFATIDNGEIWLQHLHIPQYSMGSWTNHTPKRTRKLLLHRNEIDSLMGKVRDGNRTLVPLKLYLKNGRVKLELGLAQGKQDYDKRQDIKRRTEEREVTRELGRRIKGINA.

The protein belongs to the SmpB family.

The protein resides in the cytoplasm. Functionally, required for rescue of stalled ribosomes mediated by trans-translation. Binds to transfer-messenger RNA (tmRNA), required for stable association of tmRNA with ribosomes. tmRNA and SmpB together mimic tRNA shape, replacing the anticodon stem-loop with SmpB. tmRNA is encoded by the ssrA gene; the 2 termini fold to resemble tRNA(Ala) and it encodes a 'tag peptide', a short internal open reading frame. During trans-translation Ala-aminoacylated tmRNA acts like a tRNA, entering the A-site of stalled ribosomes, displacing the stalled mRNA. The ribosome then switches to translate the ORF on the tmRNA; the nascent peptide is terminated with the 'tag peptide' encoded by the tmRNA and targeted for degradation. The ribosome is freed to recommence translation, which seems to be the essential function of trans-translation. The chain is SsrA-binding protein from Corynebacterium glutamicum (strain R).